A 302-amino-acid polypeptide reads, in one-letter code: Paired immunoglobulin-like type 2 receptor alpha (302 aa).

The signal sequence occupies residues 1–31 (MALLISLPGGTPAMAQILLLLSSACLHAGNS). Over 32–198 (ERSNRKNGFG…GGLDLQTTVG (167 aa)) the chain is Extracellular. 2 N-linked (GlcNAc...) asparagine glycosylation sites follow: Asn-90 and Asn-107. The chain crosses the membrane as a helical span at residues 199–219 (LATAAAVFLVGVLGLIVFLWW). The Cytoplasmic portion of the chain corresponds to 220 to 302 (KRRRQGQKTK…ETVYSIVKAK (83 aa)). Basic and acidic residues predominate over residues 228-248 (TKAEIPAREPLETSEKHESVG). Residues 228 to 293 (TKAEIPAREP…LPVHGNPQEE (66 aa)) are disordered. Short sequence motifs (ITIM motif) lie at residues 265-270 (IVYASI) and 294-299 (TVYSIV). Residues 270-280 (ISLSSPTSPGT) show a composition bias toward polar residues.

Interacts with CD99. In terms of processing, phosphorylated on tyrosine residues.

It localises to the membrane. Paired receptors consist of highly related activating and inhibitory receptors and are widely involved in the regulation of the immune system. Receptor for CD99 and PIANP. The sequence is that of Paired immunoglobulin-like type 2 receptor alpha (Pilra) from Mus musculus (Mouse).